The primary structure comprises 455 residues: Ribosomal protein uS12 methylthiotransferase RimO (455 aa).

Residues G21–P131 enclose the MTTase N-terminal domain. C30, C66, C95, C164, C168, and C171 together coordinate [4Fe-4S] cluster. One can recognise a Radical SAM core domain in the interval L150–A387. Residues Q390–I455 enclose the TRAM domain.

This sequence belongs to the methylthiotransferase family. RimO subfamily. [4Fe-4S] cluster serves as cofactor.

Its subcellular location is the cytoplasm. It carries out the reaction L-aspartate(89)-[ribosomal protein uS12]-hydrogen + (sulfur carrier)-SH + AH2 + 2 S-adenosyl-L-methionine = 3-methylsulfanyl-L-aspartate(89)-[ribosomal protein uS12]-hydrogen + (sulfur carrier)-H + 5'-deoxyadenosine + L-methionine + A + S-adenosyl-L-homocysteine + 2 H(+). Its function is as follows. Catalyzes the methylthiolation of an aspartic acid residue of ribosomal protein uS12. In Marinobacter nauticus (strain ATCC 700491 / DSM 11845 / VT8) (Marinobacter aquaeolei), this protein is Ribosomal protein uS12 methylthiotransferase RimO.